A 377-amino-acid polypeptide reads, in one-letter code: uncharacterized protein (377 aa).

The N-terminal stretch at 1–23 (MLKFRNFFKLTLLTLASAFFLSG) is a signal peptide. Residue cysteine 24 is the site of N-palmitoyl cysteine attachment. Cysteine 24 is lipidated: S-diacylglycerol cysteine.

The protein localises to the cell membrane. This is an uncharacterized protein from Mycoplasma genitalium (strain ATCC 33530 / DSM 19775 / NCTC 10195 / G37) (Mycoplasmoides genitalium).